The primary structure comprises 344 residues: MRIIFYLTLLLFIFNKVKSDNCTIGGLTATSCNETSQQYYFTQDKFTSEDIIQIPFGAKLYFSGDVVFNYPVNFNCQPSLKKELSRFVYEIDCLQVFSNGTITYNAEEIYCSVDFSTVFDIDTMVDKPVDMVESWSRFMKPTKGFGETKVYEPVVYSRIKAQAGYKCDFNPGFRTSRRVPDKYALHSKCAWAKALFPAGDFNIRITPCNLQNNSESVRKLEEIGFDKNFYMEKLDFTPTDGLFYNGNRESIYIRYYPNFEKKFDLSSIQDIFDSYLYIINYCEDNPNKFEISFGMQSDLWDHRAFNLTDFQLVKNVNGTFEGSATRNQISIMVLILSVLLVLIL.

An N-terminal signal peptide occupies residues 1–19 (MRIIFYLTLLLFIFNKVKS). Positions 323–344 (SATRNQISIMVLILSVLLVLIL) are cleaved as a propeptide — removed in mature form.

It is found in the cell membrane. This is an uncharacterized protein from Dictyostelium discoideum (Social amoeba).